Consider the following 123-residue polypeptide: Large ribosomal subunit protein uL14 (123 aa).

This sequence belongs to the universal ribosomal protein uL14 family. Part of the 50S ribosomal subunit. Forms a cluster with proteins L3 and L19. In the 70S ribosome, L14 and L19 interact and together make contacts with the 16S rRNA in bridges B5 and B8.

Binds to 23S rRNA. Forms part of two intersubunit bridges in the 70S ribosome. The polypeptide is Large ribosomal subunit protein uL14 (Blochmanniella pennsylvanica (strain BPEN)).